A 413-amino-acid polypeptide reads, in one-letter code: Multifunctional CCA protein (413 aa).

Positions 8 and 11 each coordinate ATP. Glycine 8 and arginine 11 together coordinate CTP. Aspartate 21 and aspartate 23 together coordinate Mg(2+). ATP-binding residues include arginine 91, arginine 143, and arginine 146. Positions 91, 143, and 146 each coordinate CTP. Positions 232–333 (TGVHVMMVVD…VRLFERSDAL (102 aa)) constitute an HD domain.

It belongs to the tRNA nucleotidyltransferase/poly(A) polymerase family. Bacterial CCA-adding enzyme type 1 subfamily. In terms of assembly, monomer. Can also form homodimers and oligomers. Mg(2+) is required as a cofactor. The cofactor is Ni(2+).

It catalyses the reaction a tRNA precursor + 2 CTP + ATP = a tRNA with a 3' CCA end + 3 diphosphate. The enzyme catalyses a tRNA with a 3' CCA end + 2 CTP + ATP = a tRNA with a 3' CCACCA end + 3 diphosphate. Functionally, catalyzes the addition and repair of the essential 3'-terminal CCA sequence in tRNAs without using a nucleic acid template. Adds these three nucleotides in the order of C, C, and A to the tRNA nucleotide-73, using CTP and ATP as substrates and producing inorganic pyrophosphate. tRNA 3'-terminal CCA addition is required both for tRNA processing and repair. Also involved in tRNA surveillance by mediating tandem CCA addition to generate a CCACCA at the 3' terminus of unstable tRNAs. While stable tRNAs receive only 3'-terminal CCA, unstable tRNAs are marked with CCACCA and rapidly degraded. In Burkholderia cenocepacia (strain ATCC BAA-245 / DSM 16553 / LMG 16656 / NCTC 13227 / J2315 / CF5610) (Burkholderia cepacia (strain J2315)), this protein is Multifunctional CCA protein.